The chain runs to 619 residues: ATP-dependent RNA helicase dbp9 (619 aa).

Positions 1–30 are disordered; sequence MKRKLDANDVPSTEVAEEKETKDADNTDFE. The span at 16 to 25 shows a compositional bias: basic and acidic residues; that stretch reads AEEKETKDAD. Residues 27–55 carry the Q motif motif; sequence TDFESLNLDPRLRQALIREQFTKPTPVQS. The Helicase ATP-binding domain maps to 58 to 236; the sequence is IPLALEGKDI…GLFCRSPVIL (179 aa). Residue 71 to 78 participates in ATP binding; it reads AKTGSGKT. Positions 184–187 match the DEAD box motif; that stretch reads DEAD. The region spanning 247–484 is the Helicase C-terminal domain; it reads GISQFVVRCA…EVKPYHFEMK (238 aa). Disordered regions lie at residues 339 to 390 and 582 to 619; these read SRTS…GKAK and GDNRIRKAREKNRGKGKGRKPSGVRKVDPLKTFNRGRK. The span at 345–362 shows a compositional bias: basic and acidic residues; sequence KSKEATDGDDEAKDKMGS. Residues 587–604 show a composition bias toward basic residues; sequence RKAREKNRGKGKGRKPSG.

Belongs to the DEAD box helicase family. DDX56/DBP9 subfamily.

It is found in the nucleus. It localises to the nucleolus. The enzyme catalyses ATP + H2O = ADP + phosphate + H(+). In terms of biological role, ATP-binding RNA helicase involved in the biogenesis of 60S ribosomal subunits and is required for the normal formation of 25S and 5.8S rRNAs. This Neosartorya fischeri (strain ATCC 1020 / DSM 3700 / CBS 544.65 / FGSC A1164 / JCM 1740 / NRRL 181 / WB 181) (Aspergillus fischerianus) protein is ATP-dependent RNA helicase dbp9 (dbp9).